A 332-amino-acid polypeptide reads, in one-letter code: Ornithine carbamoyltransferase, catabolic (332 aa).

Residues 60-63, glutamine 87, arginine 111, and 138-141 each bind carbamoyl phosphate; these read STRT and HPTQ. L-ornithine contacts are provided by residues asparagine 170, aspartate 230, and 234–235; that span reads SM. Carbamoyl phosphate-binding positions include 271-272 and arginine 316; that span reads CL.

This sequence belongs to the aspartate/ornithine carbamoyltransferase superfamily. OTCase family.

It localises to the cytoplasm. It carries out the reaction carbamoyl phosphate + L-ornithine = L-citrulline + phosphate + H(+). It participates in amino-acid degradation; L-arginine degradation via ADI pathway; carbamoyl phosphate from L-arginine: step 2/2. Reversibly catalyzes the transfer of the carbamoyl group from carbamoyl phosphate (CP) to the N(epsilon) atom of ornithine (ORN) to produce L-citrulline. This Bacillus cereus (strain ATCC 10987 / NRS 248) protein is Ornithine carbamoyltransferase, catabolic.